We begin with the raw amino-acid sequence, 51 residues long: Sperm protamine P1 (51 aa).

Intrachain disulfides connect cysteine 7–cysteine 15 and cysteine 40–cysteine 48.

It belongs to the protamine P1 family. As to quaternary structure, cross-linked by interchain disulfide bonds around the DNA-helix. Testis.

The protein localises to the nucleus. Its subcellular location is the chromosome. In terms of biological role, protamines substitute for histones in the chromatin of sperm during the haploid phase of spermatogenesis. They compact sperm DNA into a highly condensed, stable and inactive complex. The protein is Sperm protamine P1 (PRM1) of Capra hircus (Goat).